We begin with the raw amino-acid sequence, 130 residues long: Large ribosomal subunit protein bL19 (130 aa).

It belongs to the bacterial ribosomal protein bL19 family.

This protein is located at the 30S-50S ribosomal subunit interface and may play a role in the structure and function of the aminoacyl-tRNA binding site. The polypeptide is Large ribosomal subunit protein bL19 (Mycoplasma mycoides subsp. mycoides SC (strain CCUG 32753 / NCTC 10114 / PG1)).